Consider the following 337-residue polypeptide: Prenyltransferase terC (337 aa).

Positions 111 and 115 each coordinate Mg(2+).

The protein belongs to the FPP/GGPP synthase family. Requires Mg(2+) as cofactor.

It functions in the pathway secondary metabolite biosynthesis. Its function is as follows. Prenyltransferase; part of the gene cluster that mediates the biosynthesis of terpendoles, indole-diterpene (IDT) mycotoxins including terpendole I, terpendole K, terpendole C, as well as the kinesin Eg5 inhibitor terpendole E. Terpendoles biosynthesis begins with the synthesis of geranylgeranyl diphosphate (GGPP) by a yet unidentified GGPP synthase. Condensation of indole-3-glycerol phosphate with GGPP by the prenyltransferase terC then forms 3-geranylgeranylindole (3-GGI), followed by epoxidation and cyclization of this intermediate (by the FAD-dependent monooxygeanse terM and the terpene cyclase terB) to form paspaline. The cytochrome monooxygenase terQ then hydroxylates paspalline at C-11 to yield terpendole E. The cytochrome monooxygenase terP converts terpendole E to 13-desoxyterpendole I, and terQ converts 13-desoxyterpendole I into terpendole I. TerF and terK are required for conversion of terpendole I to terpendole C which is further converted to terpendole K. The chain is Prenyltransferase terC from Tolypocladium album (Soil fungus).